The following is a 283-amino-acid chain: Pantothenate synthetase (283 aa).

30–37 (MGNLHAGH) lines the ATP pocket. The Proton donor role is filled by histidine 37. Residue glutamine 61 participates in (R)-pantoate binding. Glutamine 61 is a binding site for beta-alanine. 149 to 152 (GEKD) is a binding site for ATP. Glutamine 155 lines the (R)-pantoate pocket. ATP-binding positions include leucine 178 and 186-189 (MSSR).

It belongs to the pantothenate synthetase family. As to quaternary structure, homodimer.

The protein resides in the cytoplasm. It carries out the reaction (R)-pantoate + beta-alanine + ATP = (R)-pantothenate + AMP + diphosphate + H(+). The protein operates within cofactor biosynthesis; (R)-pantothenate biosynthesis; (R)-pantothenate from (R)-pantoate and beta-alanine: step 1/1. Catalyzes the condensation of pantoate with beta-alanine in an ATP-dependent reaction via a pantoyl-adenylate intermediate. This Hahella chejuensis (strain KCTC 2396) protein is Pantothenate synthetase.